Here is a 284-residue protein sequence, read N- to C-terminus: D-tagatose-1,6-bisphosphate aldolase subunit GatY (284 aa).

Aspartate 82 (proton donor) is an active-site residue. Zn(2+) contacts are provided by histidine 83 and histidine 180. Glycine 181 contributes to the dihydroxyacetone phosphate binding site. Residue histidine 208 participates in Zn(2+) binding. Residues 209–211 (GAS) and 230–233 (NVAT) contribute to the dihydroxyacetone phosphate site.

This sequence belongs to the class II fructose-bisphosphate aldolase family. TagBP aldolase GatY subfamily. In terms of assembly, forms a complex with GatZ. Zn(2+) is required as a cofactor.

It carries out the reaction D-tagatofuranose 1,6-bisphosphate = D-glyceraldehyde 3-phosphate + dihydroxyacetone phosphate. The protein operates within carbohydrate metabolism; D-tagatose 6-phosphate degradation; D-glyceraldehyde 3-phosphate and glycerone phosphate from D-tagatose 6-phosphate: step 2/2. In terms of biological role, catalytic subunit of the tagatose-1,6-bisphosphate aldolase GatYZ, which catalyzes the reversible aldol condensation of dihydroxyacetone phosphate (DHAP or glycerone-phosphate) with glyceraldehyde 3-phosphate (G3P) to produce tagatose 1,6-bisphosphate (TBP). Requires GatZ subunit for full activity and stability. Is involved in the catabolism of galactitol. This is D-tagatose-1,6-bisphosphate aldolase subunit GatY from Escherichia coli O8 (strain IAI1).